A 498-amino-acid polypeptide reads, in one-letter code: GPI mannosyltransferase 4 (498 aa).

9 helical membrane passes run 4–24 (AVIR…PAYV), 60–80 (FAPL…FNAG), 118–134 (AFLL…QSHT), 135–155 (FSNS…EVVI), 169–189 (GVLG…AGYL), 208–228 (LAAL…IDTL), 261–281 (YTHI…FALG), 286–303 (LSLP…LSLF), and 332–352 (LTLT…IMGV). N-linked (GlcNAc...) asparagine glycosylation is present at Asn-429.

The protein belongs to the glycosyltransferase 22 family. PIGZ subfamily.

It is found in the endoplasmic reticulum membrane. Its pathway is glycolipid biosynthesis; glycosylphosphatidylinositol-anchor biosynthesis. Alpha-1,2-mannosyltransferase involved in glycosylphosphatidylinositol-anchor biosynthesis. Transfers a fourth mannose to trimannosyl-GPIs during GPI precursor assembly. The presence of a fourth mannose in GPI is essential in fungi. The sequence is that of GPI mannosyltransferase 4 (SMP3) from Eremothecium gossypii (strain ATCC 10895 / CBS 109.51 / FGSC 9923 / NRRL Y-1056) (Yeast).